The sequence spans 548 residues: MKLSKKYTFRSRKVLLIILDGVGYSPKGPESGNAIAGAKLPFLNRVWNQFPTLHIQAHGKAVGMPSDDDMGNSEVGHNVLGSGRIFDQGAKLVSNSIASGDIFNGQAWKEVIGNSKKNNSTLHLLGLFSDGNVHSHIDHTKALISQAILEKVPKIRLHILLDGRDVPEKSALDYLNPFETWLNSLRKSGTDIRIASGGGRMTITMDRYEADWSMVERGWKVHVKGEGRYFSSAKEAIETFRSENPKIIDQYLPSFVISDNGKPVGKIQDGDSVVFTNFRGDRAIEISLAFTEKNFDKFDRGPLPNVLYAGIMQYDGDLKLPERFLVAPPAIDRTLGEYMASSNIPQYALSETQKYGHVTYFWNGNKSGYFDQNSEEYREILSDVIPFDQSPEMKALLITEALEKALNENKQDFYRVNYANGDMVGHTGNYLATVQAMEFLDGCVERLWKTCEKQNIVLLVTADHGNADEMFQLDKKGNVEKDSHGNPIPKTSHTLNPVPISILDPENKIRFNSKLSNPGLANVAATILDVMGYETPEGYHPSLIQNES.

Positions 20 and 73 each coordinate Mn(2+). Ser-73 acts as the Phosphoserine intermediate in catalysis. Substrate-binding positions include His-134, 164–165 (RD), Arg-200, Arg-207, 279–282 (RGDR), and Lys-354. Asp-422, His-426, Asp-463, His-464, and His-493 together coordinate Mn(2+).

It belongs to the BPG-independent phosphoglycerate mutase family. As to quaternary structure, monomer. Mn(2+) is required as a cofactor.

It carries out the reaction (2R)-2-phosphoglycerate = (2R)-3-phosphoglycerate. The protein operates within carbohydrate degradation; glycolysis; pyruvate from D-glyceraldehyde 3-phosphate: step 3/5. Functionally, catalyzes the interconversion of 2-phosphoglycerate and 3-phosphoglycerate. This is Probable 2,3-bisphosphoglycerate-independent phosphoglycerate mutase (gpmI) from Leptospira interrogans serogroup Icterohaemorrhagiae serovar copenhageni (strain Fiocruz L1-130).